Here is a 460-residue protein sequence, read N- to C-terminus: Argininosuccinate lyase (460 aa).

The protein belongs to the lyase 1 family. Argininosuccinate lyase subfamily.

It localises to the cytoplasm. The catalysed reaction is 2-(N(omega)-L-arginino)succinate = fumarate + L-arginine. Its pathway is amino-acid biosynthesis; L-arginine biosynthesis; L-arginine from L-ornithine and carbamoyl phosphate: step 3/3. The sequence is that of Argininosuccinate lyase from Solibacter usitatus (strain Ellin6076).